Reading from the N-terminus, the 304-residue chain is Opsin-1 (304 aa).

The Extracellular segment spans residues 1–45 (MIHPEQVADMLRPTTSTTSSHVPGPVPTVVPTPTEYQTLGETGHR). A helical transmembrane segment spans residues 46-66 (TLWVTFALMVLSSGIFALLSW). Residues 74 to 94 (LFHVITTLITVVASLSYFAMA) traverse the membrane as a helical segment. Residues 129-149 (YVDWALTTPLLLLELCLLAGV) form a helical membrane-spanning segment. The helical transmembrane segment at 154–174 (TLMAIVADVIMVLCGLFAALG) threads the bilayer. A helical membrane pass occupies residues 183–203 (WGWYTIGCFSYLFVIWHVALH). Residues 219–239 (FTGLAVFALLLWTAYPIIWGI) form a helical membrane-spanning segment. Residues 252 to 272 (ILIYTVLDLLAKPVFGFWLLL) traverse the membrane as a helical segment. Lys263 carries the N6-(retinylidene)lysine modification. Residues 273 to 304 (SHRAMPETNIDLPGYWSHGLATEGRIRIGEED) lie on the Cytoplasmic side of the membrane.

It belongs to the archaeal/bacterial/fungal opsin family. In terms of processing, binds all-trans retinal via a protonated Schiff base linkage.

It localises to the membrane. Could facilitate a sensory photoresponse. This is Opsin-1 (nop-1) from Neurospora crassa (strain ATCC 24698 / 74-OR23-1A / CBS 708.71 / DSM 1257 / FGSC 987).